The chain runs to 284 residues: Bifunctional protein FolD 1 (284 aa).

NADP(+)-binding positions include 166-168 and Ile-232; that span reads GAS.

It belongs to the tetrahydrofolate dehydrogenase/cyclohydrolase family. As to quaternary structure, homodimer.

The catalysed reaction is (6R)-5,10-methylene-5,6,7,8-tetrahydrofolate + NADP(+) = (6R)-5,10-methenyltetrahydrofolate + NADPH. It carries out the reaction (6R)-5,10-methenyltetrahydrofolate + H2O = (6R)-10-formyltetrahydrofolate + H(+). It participates in one-carbon metabolism; tetrahydrofolate interconversion. Functionally, catalyzes the oxidation of 5,10-methylenetetrahydrofolate to 5,10-methenyltetrahydrofolate and then the hydrolysis of 5,10-methenyltetrahydrofolate to 10-formyltetrahydrofolate. This is Bifunctional protein FolD 1 from Ectopseudomonas mendocina (strain ymp) (Pseudomonas mendocina).